The sequence spans 256 residues: UPF0246 protein Maqu_2499 (256 aa).

This sequence belongs to the UPF0246 family.

This Marinobacter nauticus (strain ATCC 700491 / DSM 11845 / VT8) (Marinobacter aquaeolei) protein is UPF0246 protein Maqu_2499.